A 417-amino-acid chain; its full sequence is Membrane protein UL43 (417 aa).

The disordered stretch occupies residues 1–21 (MLRNDSHRAVSPEDGQGRVDD). The next 5 helical transmembrane spans lie at 57–77 (GPYA…LGFM), 90–110 (IYAW…SLGE), 119–139 (APGP…LLVL), 146–166 (LFLL…VGGL), and 175–195 (WWIG…GPGA). Residues 217–254 (AGESLSRRPPEDPERPGVPGPPSPPTPQRSHGPPADEV) are disordered. Basic and acidic residues predominate over residues 221–231 (LSRRPPEDPER). Residues 232–243 (PGVPGPPSPPTP) show a composition bias toward pro residues. The next 5 membrane-spanning stretches (helical) occupy residues 263–283 (ENVW…VKTV), 291–311 (PGPG…AVAL), 323–343 (LTDP…GLVF), 348–368 (VVVY…VLGL), and 389–409 (GLFF…CPPG).

It belongs to the alphaherpesvirinae HHV-1 UL43 family.

The protein localises to the membrane. This chain is Membrane protein UL43, found in Human herpesvirus 1 (strain 17) (HHV-1).